An 81-amino-acid chain; its full sequence is Beta-defensin 34 (81 aa).

The first 20 residues, 1–20 (MKTFLFLFAVLFFWSQPRMH), serve as a signal peptide directing secretion. 3 disulfide bridges follow: Cys-28/Cys-55, Cys-35/Cys-49, and Cys-39/Cys-56. Residues 62 to 72 (CGRSKGNQSDE) show a composition bias toward polar residues. Residues 62-81 (CGRSKGNQSDEGSGHMGTRG) are disordered.

This sequence belongs to the beta-defensin family. Only expressed in epididymis (caput, corpus and cauda).

The protein localises to the secreted. Its function is as follows. Has antibacterial activity. The polypeptide is Beta-defensin 34 (Defb34) (Mus musculus (Mouse)).